The following is a 132-amino-acid chain: Small ribosomal subunit protein uS9 (132 aa).

Belongs to the universal ribosomal protein uS9 family.

In Baumannia cicadellinicola subsp. Homalodisca coagulata, this protein is Small ribosomal subunit protein uS9.